A 125-amino-acid polypeptide reads, in one-letter code: Small ribosomal subunit protein uS12c (125 aa).

Belongs to the universal ribosomal protein uS12 family. Part of the 30S ribosomal subunit.

Its subcellular location is the plastid. The protein localises to the chloroplast. In terms of biological role, with S4 and S5 plays an important role in translational accuracy. Located at the interface of the 30S and 50S subunits. This chain is Small ribosomal subunit protein uS12c (rps12), found in Tupiella akineta (Green alga).